Here is a 75-residue protein sequence, read N- to C-terminus: Psi-conotoxin PIIIE (75 aa).

The first 19 residues, 1–19 (MSKLGALLTICLLLFPITA), serve as a signal peptide directing secretion. A propeptide spanning residues 20–50 (LLMDGDQPADRPAERMDYDISSEVHRLLERR) is cleaved from the precursor. 4-hydroxyproline is present on residues P52, P53, and P64. Disulfide bonds link C54–C66, C55–C71, and C60–C72. Position 74 is a glycine amide (G74).

Expressed by the venom duct.

The protein localises to the secreted. Its function is as follows. Psi-conotoxins act on postsynaptic membranes, and act as non-competitive antagonist of nicotinic acetylcholine receptors (nAChR). Is more toxic than Psi-conotoxin PIIIF. In vivo, has paralytic activity when injected intraperitoneally into goldfish. The polypeptide is Psi-conotoxin PIIIE (Conus purpurascens (Purple cone)).